Here is a 700-residue protein sequence, read N- to C-terminus: Transketolase (700 aa).

T2 is modified (N-acetylthreonine). H45 serves as a coordination point for substrate. Thiamine diphosphate contacts are provided by residues T48, H85, 133-135 (GPL), and L135. D177 is a Mg(2+) binding site. Thiamine diphosphate is bound by residues G178 and N207. N207 and I209 together coordinate Mg(2+). Substrate is bound by residues H283, R378, and S405. H283 lines the thiamine diphosphate pocket. The active-site Proton donor is E441. Position 467 (F467) interacts with thiamine diphosphate. Substrate contacts are provided by H491, D499, and R552.

Belongs to the transketolase family. Homodimer. Requires Mg(2+) as cofactor. It depends on Ca(2+) as a cofactor. The cofactor is Mn(2+). Co(2+) serves as cofactor. Thiamine diphosphate is required as a cofactor.

The catalysed reaction is D-sedoheptulose 7-phosphate + D-glyceraldehyde 3-phosphate = aldehydo-D-ribose 5-phosphate + D-xylulose 5-phosphate. Functionally, catalyzes the reversible transfer of a two-carbon ketol group from sedoheptulose-7-phosphate to glyceraldehyde-3-phosphate, producing xylulose-5-phosphate and ribose-5-phosphate. Catalyzes the transfer of a two-carbon ketol group from a ketose donor to an aldose acceptor, via a covalent intermediate with the cofactor thiamine pyrophosphate. The polypeptide is Transketolase (tkt) (Mycobacterium tuberculosis (strain ATCC 25618 / H37Rv)).